Here is a 605-residue protein sequence, read N- to C-terminus: Tyrosyl-DNA phosphodiesterase 1 (605 aa).

The short motif at 81 to 86 is the Nuclear localization signal element; sequence RKKVKP. Catalysis depends on histidine 236, which acts as the Nucleophile. Position 238 (lysine 238) interacts with substrate. An interaction with DNA region spans residues 379-382; that stretch reads SLGS. Histidine 466 serves as the catalytic Proton donor/acceptor. Lysine 468 is a substrate binding site.

It belongs to the tyrosyl-DNA phosphodiesterase family. As to expression, ubiquitous, with a low level in roots.

The protein localises to the nucleus. Its activity is regulated as follows. Inhibited by vanadate analogs. DNA repair enzyme that can remove a variety of covalent adducts from DNA through hydrolysis of a 3'-phosphodiester bond, giving rise to DNA with a free 3' phosphate. Catalyzes the hydrolysis of dead-end complexes between DNA and the topoisomerase I active site tyrosine residue. The protein is Tyrosyl-DNA phosphodiesterase 1 of Arabidopsis thaliana (Mouse-ear cress).